The chain runs to 1030 residues: Peroxisomal ATPase PEX6 (1030 aa).

Residues 478 to 683 (VLLHSTTNNV…VETARMTATA (206 aa)) are AAA-cassette D1. An AAA-cassette D2 region spans residues 767–956 (GILFYGPPGT…CSDAMLNAMS (190 aa)). 772 to 779 (GPPGTGKT) lines the ATP pocket.

The protein belongs to the AAA ATPase family. Interacts with PEX1; forming the PEX1-PEX6 AAA ATPase complex, which is composed of a heterohexamer formed by a trimer of PEX1-PEX6 dimers. Interacts with PEX15; anchors PEX1-PEX6 heterooligomers to the peroxisomal membrane and mediates their association with the peroxisomal importomer. Interacts with UBP15.

It localises to the cytoplasm. The protein localises to the cytosol. Its subcellular location is the peroxisome membrane. It carries out the reaction ATP + H2O = ADP + phosphate + H(+). In terms of biological role, component of the PEX1-PEX6 AAA ATPase complex, a protein dislocase complex that mediates the ATP-dependent extraction of the PEX5 receptor from peroxisomal membranes, an essential step for PEX5 recycling. Specifically recognizes PEX5 monoubiquitinated at 'Cys-6', and pulls it out of the peroxisome lumen through the PEX2-PEX10-PEX12 retrotranslocation channel. Extraction by the PEX1-PEX6 AAA ATPase complex is accompanied by unfolding of the TPR repeats and release of bound cargo from PEX5. The protein is Peroxisomal ATPase PEX6 of Saccharomyces cerevisiae (strain ATCC 204508 / S288c) (Baker's yeast).